Reading from the N-terminus, the 154-residue chain is Putative thioredoxin H10 (154 aa).

The Thioredoxin domain maps to 24 to 148 (NNNNSYGQTR…LQKKTAAAAD (125 aa)). Residues C74 and C77 each act as nucleophile in the active site. The cysteines at positions 74 and 77 are disulfide-linked.

It belongs to the thioredoxin family.

The protein localises to the cytoplasm. In terms of biological role, probable thiol-disulfide oxidoreductase that may be involved in the redox regulation of a number of cytosolic enzymes. The chain is Putative thioredoxin H10 from Arabidopsis thaliana (Mouse-ear cress).